A 316-amino-acid chain; its full sequence is tRNA pseudouridine synthase B (316 aa).

Asp-47 functions as the Nucleophile in the catalytic mechanism.

It belongs to the pseudouridine synthase TruB family. Type 1 subfamily.

The enzyme catalyses uridine(55) in tRNA = pseudouridine(55) in tRNA. Functionally, responsible for synthesis of pseudouridine from uracil-55 in the psi GC loop of transfer RNAs. This chain is tRNA pseudouridine synthase B, found in Photobacterium profundum (strain SS9).